Here is a 106-residue protein sequence, read N- to C-terminus: Iron-sulfur cluster assembly protein CyaY (106 aa).

Belongs to the frataxin family.

In terms of biological role, involved in iron-sulfur (Fe-S) cluster assembly. May act as a regulator of Fe-S biogenesis. The chain is Iron-sulfur cluster assembly protein CyaY from Escherichia coli (strain SMS-3-5 / SECEC).